Consider the following 531-residue polypeptide: Peptide chain release factor 3 (531 aa).

The 270-residue stretch at 11-280 (GRRRTFAIIS…AFIRFASRPG (270 aa)) folds into the tr-type G domain. GTP is bound by residues 20-27 (SHPDAGKT), 88-92 (DTPGH), and 142-145 (NKLD).

This sequence belongs to the TRAFAC class translation factor GTPase superfamily. Classic translation factor GTPase family. PrfC subfamily.

The protein resides in the cytoplasm. Increases the formation of ribosomal termination complexes and stimulates activities of RF-1 and RF-2. It binds guanine nucleotides and has strong preference for UGA stop codons. It may interact directly with the ribosome. The stimulation of RF-1 and RF-2 is significantly reduced by GTP and GDP, but not by GMP. The chain is Peptide chain release factor 3 from Gloeobacter violaceus (strain ATCC 29082 / PCC 7421).